The primary structure comprises 330 residues: D-alanine--D-alanine ligase (330 aa).

In terms of domain architecture, ATP-grasp spans 120 to 326 (KLWYDALGIP…FKTFLQKAVL (207 aa)). 150–205 (AFKQWGGLFVKAACQGSSVGCYKVTSEAELSKAINDAFGYSQQVLVEKAVKPRELE) lines the ATP pocket. Mg(2+)-binding residues include Asp-280, Glu-293, and Asn-295.

The protein belongs to the D-alanine--D-alanine ligase family. It depends on Mg(2+) as a cofactor. Mn(2+) serves as cofactor.

Its subcellular location is the cytoplasm. The enzyme catalyses 2 D-alanine + ATP = D-alanyl-D-alanine + ADP + phosphate + H(+). The protein operates within cell wall biogenesis; peptidoglycan biosynthesis. Its function is as follows. Cell wall formation. This is D-alanine--D-alanine ligase from Aliivibrio fischeri (strain ATCC 700601 / ES114) (Vibrio fischeri).